The chain runs to 533 residues: Decreased expression in renal and prostate cancer protein (533 aa).

The span at 1–12 (MKEPRIFPRERP) shows a compositional bias: basic and acidic residues. Disordered regions lie at residues 1 to 31 (MKEP…GGPV), 67 to 164 (QNPS…PDPR), 177 to 259 (MRAG…RAGG), and 299 to 350 (ASGN…PNSA). The residue at position 160 (serine 160) is a Phosphoserine. Residues 299-309 (ASGNMGTNPPT) are compositionally biased toward polar residues. Arginine 368 carries the post-translational modification Asymmetric dimethylarginine. Arginine 396 is subject to Omega-N-methylarginine. A Phosphoserine modification is found at serine 432.

This sequence belongs to the DERPC family.

The protein localises to the nucleus. In terms of biological role, potential tumor suppressor. The polypeptide is Decreased expression in renal and prostate cancer protein (Mus musculus (Mouse)).